The chain runs to 654 residues: Endoplasmic reticulum chaperone BiP (654 aa).

The N-terminal stretch at 1 to 18 (MKLSLVAAMLLLLSAARA) is a signal peptide. Positions 1 to 80 (MKLSLVAAML…EGERLIGDAA (80 aa)) are required for interaction with ELAPOR1. Residue 36-39 (GTTY) participates in ATP binding. S86 is modified (phosphoserine). K96 lines the ATP pocket. K125 is subject to N6-acetyllysine. Residues 125–280 (KPYIQVDIGG…KKKTGKDVRK (156 aa)) are nucleotide-binding (NBD). Y160 carries the post-translational modification 3'-nitrotyrosine. N6-acetyllysine is present on K213. 227–229 (GGT) is an ATP binding site. N6-acetyllysine is present on K271. 293–300 (EKAKRALS) is a binding site for ATP. An N6-acetyllysine modification is found at K326. K352 is covalently cross-linked (Glycyl lysine isopeptide (Lys-Gly) (interchain with G-Cter in SUMO2)). K353 is modified (N6-acetyllysine; alternate). K353 is covalently cross-linked (Glycyl lysine isopeptide (Lys-Gly) (interchain with G-Cter in SUMO1); alternate). 364–367 (GSTR) contributes to the ATP binding site. The segment at 409–419 (QDTGDLVLLDV) is interdomain linker. The segment at 420 to 500 (CPLTLGIETV…PRGVPQIEVT (81 aa)) is substrate-binding (SBD). An N6-succinyllysine modification is found at K447. The residue at position 492 (R492) is an Omega-N-methylarginine. T518 is modified (O-AMP-threonine; alternate). Position 518 is a phosphothreonine; alternate (T518). N6,N6,N6-trimethyllysine; by METTL21A; in vitro is present on K585. K585 carries the N6,N6-dimethyllysine; alternate modification. K585 carries the N6-methyllysine; alternate modification. The residue at position 591 (K591) is an N6-methyllysine. Residues 633–654 (KLYGSAGPPPTGEEDTAEKDEL) form a disordered region. 2 positions are modified to phosphothreonine: T643 and T648. The segment covering 644-654 (GEEDTAEKDEL) has biased composition (acidic residues). The Prevents secretion from ER signature appears at 651 to 654 (KDEL).

Belongs to the heat shock protein 70 family. Monomer and homooligomer; homooligomerization via the interdomain linker inactivates the chaperone activity and acts as a storage of HSPA5/BiP molecules. Interacts with DNAJC1 (via J domain). Component of an EIF2 complex at least composed of CELF1/CUGBP1, CALR, CALR3, EIF2S1, EIF2S2, HSP90B1 and HSPA5. Part of a large chaperone multiprotein complex comprising DNAJB11, HSP90B1, HSPA5, HYOU, PDIA2, PDIA4, PDIA6, PPIB, SDF2L1, UGGT1 and very small amounts of ERP29, but not, or at very low levels, CALR nor CANX. Interacts with TMEM132A and TRIM21. May form a complex with ERLEC1, OS9, SEL1L and SYVN1. Interacts with DNAJC10. Interacts with DNAJB9/ERdj4; leading to recruit HSPA5/BiP to ERN1/IRE1. Interacts with ERN1/IRE1 (via luminal domain); the interaction takes place following interaction with DNAJB9/ERdj4 and leads to inactivate ERN1/IRE1, the interaction also competitively inhibits ERN1 interaction with MANF. Interacts directly with MANF (via SAP domain); the interaction inhibits ATP binding to HSPA5/BiP and subsequent nucleotide exchange. Interacts with EIF2AK3/PERK (via luminal domain); interaction leads to inactivate EIF2AK3/PERK. Interacts with MX1. Interacts with METTL23. Interacts with CEMIP; the interaction induces calcium leakage from the endoplasmic reticulum and cell migration. Interacts with PCSK4 form; the interaction takes place in the endoplasmic reticulum. Interacts with CIPC. Interacts with CCDC88B (via C-terminus); the interaction opposes ERN1-mediated JNK activation, protecting against apoptosis. Interacts with INPP5K; necessary for INPP5K localization at the endoplasmic reticulum. Interacts with MANF; the interaction is direct. Interacts with LOXL2; leading to activate the ERN1/IRE1-XBP1 pathway of the unfolded protein response. Interacts with CLU under stressed condition; interaction increases CLU protein stability; facilitates its retrotranslocation and redistribution to the mitochondria; cooperatively suppress stress-induced apoptosis by stabilizing mitochondrial membrane integrity. Interacts with CCDC47. Interacts with CLN3. Interacts with ELAPOR1; may regulate the function of HSPA5 in apoptosis and cell proliferation. Interacts with CASP7. Interacts with ILDR2; the interaction stabilizes ILDR2 expression. Interacts with ADAM7. As to quaternary structure, (Microbial infection) Interacts with Japanese encephalitis virus envelope protein E. In terms of assembly, (Microbial infection) Interacts with R.delemar invasin CotH3 on the surface of nasal epithelial cells. Interacts with R.delemar invasin CotH2. (Microbial infection) Interacts with Zika virus envelope protein E and non-structural protein 1 in a chaperone-client manner. AMPylated by FICD. In unstressed cells, AMPylation at Thr-518 by FICD inactivates the chaperome activity: AMPylated form is locked in a relatively inert state and only weakly stimulated by J domain-containing proteins. In response to endoplasmic reticulum stress, de-AMPylation by the same protein, FICD, restores the chaperone activity.

It is found in the endoplasmic reticulum lumen. The protein localises to the melanosome. Its subcellular location is the cytoplasm. The protein resides in the cell surface. It catalyses the reaction ATP + H2O = ADP + phosphate + H(+). Its activity is regulated as follows. The chaperone activity is regulated by ATP-induced allosteric coupling of the nucleotide-binding (NBD) and substrate-binding (SBD) domains. In the ADP-bound and nucleotide-free (apo) states, the two domains have little interaction. In contrast, in the ATP-bound state the two domains are tightly coupled, which results in drastically accelerated kinetics in both binding and release of polypeptide substrates. J domain-containing co-chaperones (DNAJB9/ERdj4 or DNAJC10/ERdj5) stimulate the ATPase activity and are required for efficient substrate recognition by HSPA5/BiP. Homooligomerization inactivates participating HSPA5/BiP protomers and probably act as reservoirs to store HSPA5/BiP molecules when they are not needed by the cell. Its function is as follows. Endoplasmic reticulum chaperone that plays a key role in protein folding and quality control in the endoplasmic reticulum lumen. Involved in the correct folding of proteins and degradation of misfolded proteins via its interaction with DNAJC10/ERdj5, probably to facilitate the release of DNAJC10/ERdj5 from its substrate. Acts as a key repressor of the EIF2AK3/PERK and ERN1/IRE1-mediated unfolded protein response (UPR). In the unstressed endoplasmic reticulum, recruited by DNAJB9/ERdj4 to the luminal region of ERN1/IRE1, leading to disrupt the dimerization of ERN1/IRE1, thereby inactivating ERN1/IRE1. Also binds and inactivates EIF2AK3/PERK in unstressed cells. Accumulation of misfolded protein in the endoplasmic reticulum causes release of HSPA5/BiP from ERN1/IRE1 and EIF2AK3/PERK, allowing their homodimerization and subsequent activation. Plays an auxiliary role in post-translational transport of small presecretory proteins across endoplasmic reticulum (ER). May function as an allosteric modulator for SEC61 channel-forming translocon complex, likely cooperating with SEC62 to enable the productive insertion of these precursors into SEC61 channel. Appears to specifically regulate translocation of precursors having inhibitory residues in their mature region that weaken channel gating. May also play a role in apoptosis and cell proliferation. (Microbial infection) Plays an important role in viral binding to the host cell membrane and entry for several flaviruses such as Dengue virus, Zika virus and Japanese encephalitis virus. Acts as a component of the cellular receptor for Dengue virus serotype 2/DENV-2 on human liver cells. In terms of biological role, (Microbial infection) Acts as a receptor for CotH proteins expressed by fungi of the order mucorales, the causative agent of mucormycosis, which plays an important role in epithelial cell invasion by the fungi. Acts as a receptor for R.delemar CotH3 in nasal epithelial cells, which may be an early step in rhinoorbital/cerebral mucormycosis (RCM) disease progression. The protein is Endoplasmic reticulum chaperone BiP of Homo sapiens (Human).